Reading from the N-terminus, the 129-residue chain is Follitropin subunit beta (129 aa).

Residues 1-18 form the signal peptide; sequence MKSVQLCLLLWCWRAICC. 6 disulfide bridges follow: cysteine 21-cysteine 69, cysteine 35-cysteine 84, cysteine 38-cysteine 122, cysteine 46-cysteine 100, cysteine 50-cysteine 102, and cysteine 105-cysteine 112. Asparagine 25 and asparagine 42 each carry an N-linked (GlcNAc...) asparagine glycan.

Belongs to the glycoprotein hormones subunit beta family. In terms of assembly, heterodimer. The active follitropin is a heterodimer composed of an alpha chain/CGA shared with other hormones and a unique beta chain/FSHB shown here.

The protein localises to the secreted. Together with the alpha chain CGA constitutes follitropin, the follicle-stimulating hormone, and provides its biological specificity to the hormone heterodimer. Binds FSHR, a G protein-coupled receptor, on target cells to activate downstream signaling pathways. Follitropin is involved in follicle development and spermatogenesis in reproductive organs. This Meriones unguiculatus (Mongolian jird) protein is Follitropin subunit beta (FSHB).